The primary structure comprises 182 residues: Large ribosomal subunit protein uL5 (182 aa).

The protein belongs to the universal ribosomal protein uL5 family. In terms of assembly, part of the 50S ribosomal subunit; part of the 5S rRNA/L5/L18/L25 subcomplex. Contacts the 5S rRNA and the P site tRNA. Forms a bridge to the 30S subunit in the 70S ribosome.

This is one of the proteins that bind and probably mediate the attachment of the 5S RNA into the large ribosomal subunit, where it forms part of the central protuberance. In the 70S ribosome it contacts protein S13 of the 30S subunit (bridge B1b), connecting the 2 subunits; this bridge is implicated in subunit movement. Contacts the P site tRNA; the 5S rRNA and some of its associated proteins might help stabilize positioning of ribosome-bound tRNAs. This is Large ribosomal subunit protein uL5 from Borrelia duttonii (strain Ly).